The following is a 282-amino-acid chain: MAENADLVEWPKKDKRRFLHVVYRVGDLDRTIQFYTECFGMKVLRKRDVPEEKYSNAFLGFGPETSNFVVELTYNYGVSSYDIGTGFGHFAISTQDVSKMVEAVRAKGGNVTREPGPVKGGGSVIAFVKDPDGYTFELIQRGPTPEPLCQVMLRVGDLDRAVKFMEKALGMRLLRRIERPEYNTIGMMGYAEEYESIVLELTYNYGVTEYTKGNAYAQIAIGTDDVYKSAEVVKIVNQELGGKITREAGPLPGLGTKIVSFLDPDGWKQVLVDNEDFLKELE.

Residue Ala2 is modified to N-acetylalanine. 2 VOC domains span residues 17–141 (RFLH…LIQR) and 147–274 (PLCQ…LVDN). His20 lines the Zn(2+) pocket. Residue Arg24 participates in substrate binding. Glu71 is a binding site for Zn(2+). Asn75 and His89 together coordinate substrate. Positions 89 and 137 each coordinate Zn(2+). Glu137 serves as the catalytic Proton donor/acceptor. 254 to 255 (LG) serves as a coordination point for substrate.

The protein belongs to the glyoxalase I family. Zn(2+) serves as cofactor.

The enzyme catalyses (R)-S-lactoylglutathione = methylglyoxal + glutathione. It participates in secondary metabolite metabolism; methylglyoxal degradation; (R)-lactate from methylglyoxal: step 1/2. Its function is as follows. Catalyzes the conversion of hemimercaptal, formed from methylglyoxal and glutathione, to S-lactoylglutathione. This is Putative lactoylglutathione lyase from Brassica oleracea var. gemmifera (Brussel sprouts).